The sequence spans 227 residues: Small ribosomal subunit protein uS3 (227 aa).

Residues 38–106 (LRKFIKDRFY…NVNINIQEIR (69 aa)) enclose the KH type-2 domain.

It belongs to the universal ribosomal protein uS3 family. In terms of assembly, part of the 30S ribosomal subunit. Forms a tight complex with proteins S10 and S14.

Functionally, binds the lower part of the 30S subunit head. Binds mRNA in the 70S ribosome, positioning it for translation. This is Small ribosomal subunit protein uS3 from Syntrophomonas wolfei subsp. wolfei (strain DSM 2245B / Goettingen).